A 475-amino-acid chain; its full sequence is 23S rRNA (uracil(1939)-C(5))-methyltransferase RlmD (475 aa).

Residues 1–10 (MAMLGKRRPP) show a composition bias toward basic residues. The segment at 1-33 (MAMLGKRRPPRTANERVRRERGSATRRDDATAD) is disordered. The segment covering 13–30 (ANERVRRERGSATRRDDA) has biased composition (basic and acidic residues). The 60-residue stretch at 26-85 (RRDDATADGLSIERLAHDGRGVARDPHGKTVFVDQALPGERVRVAVHRQRKRFDEAHVVE) folds into the TRAM domain. [4Fe-4S] cluster contacts are provided by Cys98, Cys104, Cys107, and Cys183. S-adenosyl-L-methionine-binding residues include Gln294, Phe323, Asn328, Glu344, Asp371, and Asp388. Cys414 functions as the Nucleophile in the catalytic mechanism. The segment at 455–475 (TRDTPRGRSTSVEREDHGQGP) is disordered. Positions 457–475 (DTPRGRSTSVEREDHGQGP) are enriched in basic and acidic residues.

The protein belongs to the class I-like SAM-binding methyltransferase superfamily. RNA M5U methyltransferase family. RlmD subfamily.

It carries out the reaction uridine(1939) in 23S rRNA + S-adenosyl-L-methionine = 5-methyluridine(1939) in 23S rRNA + S-adenosyl-L-homocysteine + H(+). In terms of biological role, catalyzes the formation of 5-methyl-uridine at position 1939 (m5U1939) in 23S rRNA. The polypeptide is 23S rRNA (uracil(1939)-C(5))-methyltransferase RlmD (Chromohalobacter salexigens (strain ATCC BAA-138 / DSM 3043 / CIP 106854 / NCIMB 13768 / 1H11)).